A 169-amino-acid chain; its full sequence is Ribosome maturation factor RimP (169 aa).

This sequence belongs to the RimP family.

The protein localises to the cytoplasm. Its function is as follows. Required for maturation of 30S ribosomal subunits. The polypeptide is Ribosome maturation factor RimP (Pseudomonas putida (strain W619)).